The chain runs to 1110 residues: MGNFKSVGQEPGPPCGLGLGLGLGLCGKQGPASPAPVSASEPTRAPSSPPLPLPAPEHSPPLTRPPEGPKFPRVKNWEVGSIAYDTLSAQAQQDGPCTPRRCLGSLVFPRKLQGRPSQSPLPQEQLLGQARDFINQYYSSIKRSGSQAHELRLQEVEAEVVATGTYQLRESELVFGAKQAWRNAPRCVGRIQWGKLQVFDARDCRSAQEMFTYICNHIKYATNRGNLRSAITVFPQRFPGRGDFRIWNSQLIRYAGYRQQDGSVRGDPANVEITELCVQHGWTPGNGRFDVLPLLLQAPDEPPELFTLPPELVLEVPLEHPTLEWFAALGLRWYALPAVSNMLLEIGGLEFPAVPFSGWYMSSEIGMRNFCDPHRYNILEDVAVCMDLDTRTTSSLWKDKAAVEINVAVLHSYQLAKVTIVDHHAATASFMKHLENEQKARGGCPADWAWIVPPISGSLTPVFHQEMVNYFLSPAFRYQPDPWKGSGTKGTGITRKKTFKEVANAVKISASLMGTVMAKRVKATILYGSETGRAQSYAQQLGRLFRKAFDPRVLCMDEYDVVSLEHETLVLVVTSTFGNGDPPENGESFAAALMEMSGPYNSSPRPEQHKSYKIRFNSVSCSDPLVTSWRRKRKESSNTDSAGALGTLRFCVFGLGSRAYPHFCAFARAVDTRLEELGGERLLQLGQGDELCGQEEAFRGWAQAAFQAACETFCVGEDAKAAAKDIFSPKCSWKRQRYRLSTQAQGLQLLPGLIHVHRRKMFQATILSVENLQSSKSTRATILVRLDTGGQEGLQYQPGDHIGICPPNRPGLVEALLSRVEDPPPPAESVAVEQLEKGSPGGPPPGWVRDPRLPPCTLRQALTFFLDITSPPSPRLLRLLSTLAEEPSEQQELETLSQDPRRYEEWKWFRCPTLLEVLEQFPSIALPAPLLLTQLPLLQPRYYSVSSAPSAHPGEIHLTVAVLAYRTQDGLGPLHYGVCSTWLSQLKTGDQVPCFIRGAPSFRLPPDPSLPCILVGPGTGIAPFRGFWQERLHDIESKGLQPAPMTLVFGCRCSQLDHLYRDEVQDAQQRGVFGRVLTAFSREPNSPKERHLRGAVPWAFDLPGPDTSSP.

The disordered stretch occupies residues 1–74 (MGNFKSVGQE…PPEGPKFPRV (74 aa)). Gly residues predominate over residues 15–27 (CGLGLGLGLGLCG). Residues 31–40 (PASPAPVSAS) show a composition bias toward low complexity. A compositionally biased stretch (pro residues) spans 47-69 (SSPPLPLPAPEHSPPLTRPPEGP). Zn(2+) contacts are provided by cysteine 97 and cysteine 102. The interaction with NOSIP stretch occupies residues 101–489 (RCLGSLVFPR…PDPWKGSGTK (389 aa)). Residue serine 105 coordinates (6R)-L-erythro-5,6,7,8-tetrahydrobiopterin. At serine 117 the chain carries Phosphoserine. Position 187 (cysteine 187) interacts with heme b. L-arginine-binding residues include glutamine 250, tryptophan 359, tyrosine 360, and glutamate 364. Residue arginine 368 participates in (6R)-L-erythro-5,6,7,8-tetrahydrobiopterin binding. Asparagine 369 lines the L-arginine pocket. Alanine 449, tryptophan 450, and phenylalanine 463 together coordinate (6R)-L-erythro-5,6,7,8-tetrahydrobiopterin. Tyrosine 478 is a binding site for heme b. At threonine 498 the chain carries Phosphothreonine. Serine 529, glutamate 530, threonine 531, arginine 533, serine 575, and threonine 576 together coordinate FMN. Phosphoserine occurs at positions 618, 636, and 641. Serine 657, cysteine 664, glutamate 690, and glutamine 694 together coordinate FMN. An NADP(+)-binding site is contributed by arginine 779. Histidine 801 provides a ligand contact to FAD. Positions 821–848 (EDPPPPAESVAVEQLEKGSPGGPPPGWV) are disordered. A Phosphoserine modification is found at serine 839. FAD is bound by residues arginine 941, tyrosine 943, serine 944, threonine 959, alanine 961, tyrosine 965, valine 978, cysteine 979, and serine 980. NADP(+) contacts are provided by threonine 1019, arginine 1052, serine 1081, arginine 1082, and lysine 1088.

The protein belongs to the NOS family. Homodimer. Interacts with NOSIP and NOSTRIN. Interacts with HSP90AB1. Forms a complex with ASL, ASS1 and SLC7A1; the complex regulates cell-autonomous L-arginine synthesis and citrulline recycling while channeling extracellular L-arginine to nitric oxide synthesis pathway. Heme b is required as a cofactor. Requires FAD as cofactor. The cofactor is FMN. It depends on (6R)-L-erythro-5,6,7,8-tetrahydrobiopterin as a cofactor.

The protein localises to the membrane. It localises to the caveola. Its subcellular location is the cytoplasm. It is found in the cytoskeleton. The protein resides in the golgi apparatus. The protein localises to the cell membrane. The catalysed reaction is 2 L-arginine + 3 NADPH + 4 O2 + H(+) = 2 L-citrulline + 2 nitric oxide + 3 NADP(+) + 4 H2O. With respect to regulation, stimulated by calcium/calmodulin. Inhibited by NOSIP and NOSTRIN. Its function is as follows. Produces nitric oxide (NO) which is implicated in vascular smooth muscle relaxation through a cGMP-mediated signal transduction pathway. NO mediates vascular endothelial growth factor (VEGF)-induced angiogenesis in coronary vessels and promotes blood clotting through the activation of platelets. The polypeptide is Nitric oxide synthase 3 (NOS3) (Cavia porcellus (Guinea pig)).